A 240-amino-acid polypeptide reads, in one-letter code: REF/SRPP-like protein At1g67360 (240 aa).

A disordered region spans residues K208–E240.

It belongs to the REF/SRPP family.

The polypeptide is REF/SRPP-like protein At1g67360 (Arabidopsis thaliana (Mouse-ear cress)).